The sequence spans 134 residues: Small ribosomal subunit protein uS12 (134 aa).

At Asp-89 the chain carries 3-methylthioaspartic acid. A disordered region spans residues 101-134 (TLDASGVNGRNQSRSKYGTKRPKPGQAAAGGKKK). Over residues 125–134 (GQAAAGGKKK) the composition is skewed to low complexity.

Belongs to the universal ribosomal protein uS12 family. As to quaternary structure, part of the 30S ribosomal subunit. Contacts proteins S8 and S17. May interact with IF1 in the 30S initiation complex.

Its function is as follows. With S4 and S5 plays an important role in translational accuracy. Interacts with and stabilizes bases of the 16S rRNA that are involved in tRNA selection in the A site and with the mRNA backbone. Located at the interface of the 30S and 50S subunits, it traverses the body of the 30S subunit contacting proteins on the other side and probably holding the rRNA structure together. The combined cluster of proteins S8, S12 and S17 appears to hold together the shoulder and platform of the 30S subunit. The chain is Small ribosomal subunit protein uS12 from Gemmatimonas aurantiaca (strain DSM 14586 / JCM 11422 / NBRC 100505 / T-27).